Reading from the N-terminus, the 429-residue chain is L-dopachrome tautomerase yellow-f (429 aa).

The N-terminal stretch at 1-23 is a signal peptide; sequence MLSLDVLLLCAISGFQLLISADG. N-linked (GlcNAc...) asparagine glycans are attached at residues Asn133 and Asn372.

Belongs to the major royal jelly protein family.

It localises to the secreted. It carries out the reaction L-dopachrome = 5,6-dihydroxyindole-2-carboxylate. Its pathway is pigment biosynthesis; melanin biosynthesis. Tautomerization of L-dopachrome with decarboxylation to give 5,6-dihydroxyindole (DHI). Also catalyzes the tautomerization of the methyl ester of L-dopachrome and dopamine chrome. May play a role in melanization reactions during late pupal and adult stages. May play a role in melanization reactions during larval and early pupal stages. In Drosophila melanogaster (Fruit fly), this protein is L-dopachrome tautomerase yellow-f.